The sequence spans 110 residues: Pathogenesis-related protein (110 aa).

The signal sequence occupies residues 1 to 19 (AFLLAATLTISSHMQEAGA).

It belongs to the thaumatin family.

This chain is Pathogenesis-related protein, found in Juniperus virginiana (Eastern redcedar).